The following is a 176-amino-acid chain: Glycine-rich RNA-binding protein 7 (176 aa).

Alanine 2 carries the N-acetylalanine modification. The required for RNA chaperone activity stretch occupies residues 2 to 41 (ASGDVEYRCFVGGLAWATDDRALETAFAQYGDVIDSKIIN). An RRM domain is found at 8–86 (YRCFVGGLAW…RSITVNEAQS (79 aa)). Arginine 49 is subject to ADP-ribosylarginine; by HopU1. Positions 83-103 (EAQSRGSGGGGGHRGGGGGGY) are disordered. Residues 88–103 (GSGGGGGHRGGGGGGY) show a composition bias toward gly residues. Residues 88 to 175 (GSGGGGGHRG…GYGGSGGGGG (88 aa)) form a glycine-rich (GR) required for cell-to-cell movement region. The interval 97-148 (GGGGGGYRSGGGGGYSGGGGSYGGGGGRREGGGGYSGGGGGYSSRGGGGGSY) is nuclear targeting sequence (M9). Phosphoserine occurs at positions 105 and 117. Residues 131 to 176 (YSGGGGGYSSRGGGGGSYGGGRREGGGGYGGGEGGGYGGSGGGGGW) are disordered.

Belongs to the GR-RBP family. As to quaternary structure, interacts with TRN1. Interacts with the Pseudomonas syringae type III effector HopU1. Binds to small phloem-mobile single-stranded RNAs (ss-sRNA, e.g. small interfering RNA (siRNA) and microRNA (miRNA)) in the phloeme exudate, including viral-derived sRNA (vsiRNA). In terms of processing, ADP-ribosylated by the Pseudomonas syringae type III effector HopU1. ADP-ribosylation reduces the ability of the protein to bind RNA. As to expression, ubiquitous with strong expression in guard cell.

The protein localises to the cytoplasm. It is found in the nucleus. It localises to the secreted. In terms of biological role, plays a role in RNA transcription or processing during stress. Binds RNAs and DNAs sequence with a preference to single-stranded nucleic acids. Displays strong affinity to poly(U) and poly(G) sequence. Involved in mRNA alternative splicing of numerous targets by modulating splice site selection. Negatively regulates the circadian oscillations of its own transcript as well as RBG8 transcript. Forms an interlocked post-transcriptional negative feedback loop with the RBG8 autoregulatory circuit. Both proteins negatively autoregulate and reciprocally crossregulate by binding to their pre-mRNAs and promoting unproductive splicing coupled to degradation via the NMD pathway. Involved in the regulation of abscisic acid and stress responses. Affects the growth and stress tolerance under high salt and dehydration stress conditions, and also confers freezing tolerance, particularly via the regulation of stomatal opening and closing in the guard cells. Exhibits RNA chaperone activity during the cold adaptation process. Involved in the export of mRNAs from the nucleus to the cytoplasm under cold stress conditions. Target of the Pseudomonas syringae type III effector HopU1, which could probably be involved in plant innate immunity. Component of the flowering autonomous pathway which promotes floral transition, at least partly by down-regulating FLC. Mediates cell-to-cell trafficking of RNA interference (RNAi) signals (small RNAs (sRNA), e.g. small interfering RNA (siRNA) and microRNA (miRNA)) which regulate growth and development, as well as responses to environmental inputs, including pathogen attack; can compromise zucchini yellow mosaic virus (ZYMV) and tobacco rattle virus (TRV) infections at the early stage. This Arabidopsis thaliana (Mouse-ear cress) protein is Glycine-rich RNA-binding protein 7.